We begin with the raw amino-acid sequence, 323 residues long: MNYYDALYPQLVAMGQERWAAQLQSTLSKQLLLERYGDMPEWLSALEALPQIQPSCIDLQDSVTIGSGSDLGRISSEELITLLQAFHPWRKGPYSLFGVEIETEWRSDWKWDRLLPHIQPLAGRRVLDVGCGNGYHGWRMRGVGADFVLGIEPFLVSVMQFQVMQRYLRDPQHQVIPIGVEDLPANLACFDSVFSMGVLYHRRSPLDHILELKGCLRPGGQLILETLIVEGDQETVFMPPGRYAKMRNVWFLPSIPAMTLWLQRCGFTEIACVNTNRTSHGEQHATDWMRFESLADYLDPDDESKTIEGHPAPLRAIFIATRP.

Residues lysine 91, tryptophan 105, lysine 110, glycine 130, 180–181 (VE), methionine 196, tyrosine 200, and arginine 315 each bind carboxy-S-adenosyl-L-methionine.

It belongs to the class I-like SAM-binding methyltransferase superfamily. CmoB family. Homotetramer.

It carries out the reaction carboxy-S-adenosyl-L-methionine + 5-hydroxyuridine(34) in tRNA = 5-carboxymethoxyuridine(34) in tRNA + S-adenosyl-L-homocysteine + H(+). Its function is as follows. Catalyzes carboxymethyl transfer from carboxy-S-adenosyl-L-methionine (Cx-SAM) to 5-hydroxyuridine (ho5U) to form 5-carboxymethoxyuridine (cmo5U) at position 34 in tRNAs. This chain is tRNA U34 carboxymethyltransferase, found in Trichlorobacter lovleyi (strain ATCC BAA-1151 / DSM 17278 / SZ) (Geobacter lovleyi).